A 414-amino-acid chain; its full sequence is Serine hydroxymethyltransferase (414 aa).

(6S)-5,6,7,8-tetrahydrofolate is bound by residues Leu-121 and 125-127 (GHL). Lys-229 carries the N6-(pyridoxal phosphate)lysine modification.

This sequence belongs to the SHMT family. As to quaternary structure, homodimer. The cofactor is pyridoxal 5'-phosphate.

The protein resides in the cytoplasm. The enzyme catalyses (6R)-5,10-methylene-5,6,7,8-tetrahydrofolate + glycine + H2O = (6S)-5,6,7,8-tetrahydrofolate + L-serine. It functions in the pathway one-carbon metabolism; tetrahydrofolate interconversion. It participates in amino-acid biosynthesis; glycine biosynthesis; glycine from L-serine: step 1/1. In terms of biological role, catalyzes the reversible interconversion of serine and glycine with tetrahydrofolate (THF) serving as the one-carbon carrier. This reaction serves as the major source of one-carbon groups required for the biosynthesis of purines, thymidylate, methionine, and other important biomolecules. Also exhibits THF-independent aldolase activity toward beta-hydroxyamino acids, producing glycine and aldehydes, via a retro-aldol mechanism. This Herminiimonas arsenicoxydans protein is Serine hydroxymethyltransferase.